A 123-amino-acid chain; its full sequence is Small ribosomal subunit protein uS12 (123 aa).

The residue at position 89 (Asp-89) is a 3-methylthioaspartic acid.

The protein belongs to the universal ribosomal protein uS12 family. In terms of assembly, part of the 30S ribosomal subunit. Contacts proteins S8 and S17. May interact with IF1 in the 30S initiation complex.

With S4 and S5 plays an important role in translational accuracy. Its function is as follows. Interacts with and stabilizes bases of the 16S rRNA that are involved in tRNA selection in the A site and with the mRNA backbone. Located at the interface of the 30S and 50S subunits, it traverses the body of the 30S subunit contacting proteins on the other side and probably holding the rRNA structure together. The combined cluster of proteins S8, S12 and S17 appears to hold together the shoulder and platform of the 30S subunit. In Afipia carboxidovorans (strain ATCC 49405 / DSM 1227 / KCTC 32145 / OM5) (Oligotropha carboxidovorans), this protein is Small ribosomal subunit protein uS12.